We begin with the raw amino-acid sequence, 374 residues long: Patatin-2-Kuras 1 (374 aa).

Residues 1-11 (MILATTGSTCA) form the signal peptide. Residues 20–217 (LSIDGGGIKG…TVGDPALLSL (198 aa)) form the PNPLA domain. Residues 24-29 (GGGIKG) carry the GXGXXG motif. The GXSXG motif lies at 63–67 (GTSTG). S65 functions as the Nucleophile in the catalytic mechanism. A glycan (N-linked (GlcNAc...) asparagine) is linked at N103. D203 serves as the catalytic Proton acceptor. Residues 203–205 (DGA) carry the DGA/G motif. The stretch at 309–372 (ENALTGTTTE…DRKKLRANKA (64 aa)) forms a coiled coil.

Belongs to the patatin family. In terms of tissue distribution, tuber.

It localises to the vacuole. Functionally, probable lipolytic acyl hydrolase (LAH), an activity which is thought to be involved in the response of tubers to pathogens. This is Patatin-2-Kuras 1 (pat2-k1) from Solanum tuberosum (Potato).